The following is a 353-amino-acid chain: UPF0283 membrane protein YcjF (353 aa).

Positions 1 to 19 (MSEPLKPRIDFAEPLKEEP) are enriched in basic and acidic residues. Residues 1 to 35 (MSEPLKPRIDFAEPLKEEPTSAFKAQQTFSEAESR) form a disordered region. 3 helical membrane passes run 70–90 (MVMG…VQWT), 100–120 (VALG…GSVV), and 213–233 (ESTL…FIAW).

It belongs to the UPF0283 family.

Its subcellular location is the cell inner membrane. In Salmonella dublin (strain CT_02021853), this protein is UPF0283 membrane protein YcjF.